A 139-amino-acid polypeptide reads, in one-letter code: Putative pre-16S rRNA nuclease (139 aa).

It belongs to the YqgF nuclease family.

It is found in the cytoplasm. Its function is as follows. Could be a nuclease involved in processing of the 5'-end of pre-16S rRNA. The protein is Putative pre-16S rRNA nuclease of Streptococcus thermophilus (strain ATCC BAA-491 / LMD-9).